A 417-amino-acid chain; its full sequence is NADH-quinone oxidoreductase subunit D (417 aa).

The protein belongs to the complex I 49 kDa subunit family. As to quaternary structure, NDH-1 is composed of 14 different subunits. Subunits NuoB, C, D, E, F, and G constitute the peripheral sector of the complex.

It localises to the cell inner membrane. It carries out the reaction a quinone + NADH + 5 H(+)(in) = a quinol + NAD(+) + 4 H(+)(out). Its function is as follows. NDH-1 shuttles electrons from NADH, via FMN and iron-sulfur (Fe-S) centers, to quinones in the respiratory chain. The immediate electron acceptor for the enzyme in this species is believed to be ubiquinone. Couples the redox reaction to proton translocation (for every two electrons transferred, four hydrogen ions are translocated across the cytoplasmic membrane), and thus conserves the redox energy in a proton gradient. This chain is NADH-quinone oxidoreductase subunit D, found in Nitrosomonas europaea (strain ATCC 19718 / CIP 103999 / KCTC 2705 / NBRC 14298).